We begin with the raw amino-acid sequence, 514 residues long: 2,3-bisphosphoglycerate-independent phosphoglycerate mutase (514 aa).

Residues Asp-14 and Ser-64 each contribute to the Mn(2+) site. Residue Ser-64 is the Phosphoserine intermediate of the active site. Residues His-125, 155 to 156 (RD), Arg-187, Arg-193, 263 to 266 (RADR), and Lys-336 contribute to the substrate site. Mn(2+) is bound by residues Asp-403, His-407, Asp-444, His-445, and His-463.

Belongs to the BPG-independent phosphoglycerate mutase family. In terms of assembly, monomer. It depends on Mn(2+) as a cofactor.

The enzyme catalyses (2R)-2-phosphoglycerate = (2R)-3-phosphoglycerate. It functions in the pathway carbohydrate degradation; glycolysis; pyruvate from D-glyceraldehyde 3-phosphate: step 3/5. Functionally, catalyzes the interconversion of 2-phosphoglycerate and 3-phosphoglycerate. The polypeptide is 2,3-bisphosphoglycerate-independent phosphoglycerate mutase (Shewanella sediminis (strain HAW-EB3)).